The sequence spans 136 residues: Histone H3.3 type c (136 aa).

The disordered stretch occupies residues 1–30 (MARTKQTARKSTGAKVPRKHLSSKSSFPSK). The residue at position 5 (Lys5) is an N6,N6,N6-trimethyllysine; by set1; alternate. Lys5 is subject to N6,N6-dimethyllysine; by set1; alternate. Residues Lys5 and Lys10 each carry the N6-acetyllysine; alternate modification. An N6-methyllysine; by set1; alternate modification is found at Lys5. Lys10 is modified (N6,N6,N6-trimethyllysine; alternate). N6,N6-dimethyllysine; alternate is present on Lys10. The residue at position 10 (Lys10) is an N6-methyllysine; alternate. Position 11 is a phosphoserine (Ser11). Lys15 is subject to N6-acetyllysine. Residues Lys19, Lys24, and Lys37 each carry the N6-acetyllysine; alternate modification. N6-methyllysine; alternate is present on residues Lys19, Lys24, and Lys37. Lys37 bears the N6,N6,N6-trimethyllysine; alternate mark. Lys37 carries the N6,N6-dimethyllysine; alternate modification. N6-acetyllysine is present on Lys57. N6,N6,N6-trimethyllysine; alternate is present on Lys80. N6,N6-dimethyllysine; alternate is present on Lys80. Lys80 carries the N6-methyllysine; alternate modification.

The protein belongs to the histone H3 family. As to quaternary structure, the nucleosome is a histone octamer containing two molecules each of H2A, H2B, H3 and H4 assembled in one H3-H4 heterotetramer and two H2A-H2B heterodimers. The octamer wraps approximately 147 bp of DNA. In terms of processing, acetylation is generally linked to gene activation. Different methylation states of H3K4 mark distinct developmental phases. H3K4me2 is associated with euchromatic regions. H3K4me3 is a mark of active chromatin. set1 is responsible for all mono-, di- and tri-methylation of H3K4. H3K4me facilitates subsequent acetylation of H3 and H4. Methylation at H3K9 is linked to gene repression. Post-translationally, H3S10ph, which is linked to gene activation, prevents methylation at H3K9 but facilitates acetylation of H3 and H4.

The protein resides in the nucleus. Its subcellular location is the chromosome. Its function is as follows. Core component of nucleosome. Nucleosomes wrap and compact DNA into chromatin, limiting DNA accessibility to the cellular machineries which require DNA as a template. Histones thereby play a central role in transcription regulation, DNA repair, DNA replication and chromosomal stability. DNA accessibility is regulated via a complex set of post-translational modifications of histones, also called histone code, and nucleosome remodeling. The sequence is that of Histone H3.3 type c (H3c) from Dictyostelium discoideum (Social amoeba).